The following is a 122-amino-acid chain: Ribosome-binding factor A (122 aa).

This sequence belongs to the RbfA family. As to quaternary structure, monomer. Binds 30S ribosomal subunits, but not 50S ribosomal subunits or 70S ribosomes.

It is found in the cytoplasm. Its function is as follows. One of several proteins that assist in the late maturation steps of the functional core of the 30S ribosomal subunit. Associates with free 30S ribosomal subunits (but not with 30S subunits that are part of 70S ribosomes or polysomes). Required for efficient processing of 16S rRNA. May interact with the 5'-terminal helix region of 16S rRNA. This is Ribosome-binding factor A from Polaromonas sp. (strain JS666 / ATCC BAA-500).